A 305-amino-acid polypeptide reads, in one-letter code: Homoserine kinase (305 aa).

ATP is bound at residue 93–103 (PLARGLGSSAT).

Belongs to the GHMP kinase family. Homoserine kinase subfamily.

The protein resides in the cytoplasm. It carries out the reaction L-homoserine + ATP = O-phospho-L-homoserine + ADP + H(+). It functions in the pathway amino-acid biosynthesis; L-threonine biosynthesis; L-threonine from L-aspartate: step 4/5. Its function is as follows. Catalyzes the ATP-dependent phosphorylation of L-homoserine to L-homoserine phosphate. The sequence is that of Homoserine kinase from Trichodesmium erythraeum (strain IMS101).